Consider the following 207-residue polypeptide: MASRRRKLLKIIILGDSGVGKTSLMNQFVNKKFSNQYKATIGADFLTKELQFEDRLFTLQIWDTAGQERFQSLGVAFYRGADCCVLTYDVNVMKSFESLNRWREEFLIQASPADPDNFPFVLLGNKIDVDGGSGRVVSEKKAKAWCMSKGNIPYFETSAKDGTNVEEAFQCIAKNAIQNEPEEETYLPDTIDMAGSTRPQSSSACEC.

GTP is bound by residues 15-22 (GDSGVGKT), 63-67 (DTAGQ), and 125-128 (NKID). 2 S-geranylgeranyl cysteine lipidation sites follow: cysteine 205 and cysteine 207. At cysteine 207 the chain carries Cysteine methyl ester.

Belongs to the small GTPase superfamily. Rab family.

The protein resides in the cell membrane. Functionally, protein transport. Probably involved in vesicular traffic. The protein is Ras-related protein Rab7A of Mesembryanthemum crystallinum (Common ice plant).